Reading from the N-terminus, the 120-residue chain is Large ribosomal subunit protein bL20 (120 aa).

This sequence belongs to the bacterial ribosomal protein bL20 family.

Binds directly to 23S ribosomal RNA and is necessary for the in vitro assembly process of the 50S ribosomal subunit. It is not involved in the protein synthesizing functions of that subunit. This chain is Large ribosomal subunit protein bL20, found in Ureaplasma parvum serovar 3 (strain ATCC 27815 / 27 / NCTC 11736).